Reading from the N-terminus, the 451-residue chain is Glycine--tRNA ligase (451 aa).

Substrate-binding residues include arginine 99 and glutamate 168. ATP is bound by residues 200-202 (RNE), 210-215 (FRTREF), 284-285 (EL), and 328-331 (GLDR). 215-219 (FEQME) contributes to the substrate binding site. 324-328 (EPSVG) provides a ligand contact to substrate.

It belongs to the class-II aminoacyl-tRNA synthetase family. Homodimer.

It is found in the cytoplasm. The enzyme catalyses tRNA(Gly) + glycine + ATP = glycyl-tRNA(Gly) + AMP + diphosphate. Catalyzes the attachment of glycine to tRNA(Gly). In Mycoplasmopsis synoviae (strain 53) (Mycoplasma synoviae), this protein is Glycine--tRNA ligase.